We begin with the raw amino-acid sequence, 975 residues long: Exocyst complex component 4 (975 aa).

Residue A2 is modified to N-acetylalanine. An N6-acetyllysine modification is found at K9. The residue at position 32 (S32) is a Phosphoserine. Residues 32–114 (STSDDVEDRE…HCKRDELRKL (83 aa)) adopt a coiled-coil conformation. Positions 211-224 (RNKEKGKMSSHGKD) are enriched in basic and acidic residues. Positions 211-230 (RNKEKGKMSSHGKDPSPGPL) are disordered. The residue at position 226 (S226) is a Phosphoserine. Residue T238 is modified to Phosphothreonine. S469 is modified (phosphoserine).

The protein belongs to the SEC8 family. As to quaternary structure, the exocyst complex is composed of EXOC1, EXOC2, EXOC3, EXOC4, EXOC5, EXOC6, EXOC7 and EXOC8. Interacts with BIRC6/bruce. Interacts with MYRIP. Interacts with SH3BP1; required for the localization of both SH3BP1 and the exocyst to the leading edge of migrating cells. Interacts with SLC6A9. In terms of tissue distribution, expressed in the striatum (at protein level).

It localises to the midbody. The protein localises to the midbody ring. It is found in the cell projection. The protein resides in the cytoplasm. Its subcellular location is the cytoskeleton. It localises to the microtubule organizing center. The protein localises to the centrosome. Component of the exocyst complex involved in the docking of exocytic vesicles with fusion sites on the plasma membrane. This is Exocyst complex component 4 (Exoc4) from Mus musculus (Mouse).